A 443-amino-acid polypeptide reads, in one-letter code: MAASPHTISSRLLTGSVGGCIWYLERRAIQGLPHRVTRLFRNVSNQWVTLQHLSFLKRMYVTQLHRGLSQRVKPKPEPPASPFLEHTSSGQARADEDELPSFPAPSRPLSRKPNEELVELEATSIVDHSLDTAKEKKEERQWKEMKLHTDDLPGILARLSKIKLTALVVSTTSAGFALAPGPFDWSCFLLTSLGTGLASCAANSINQFFEVPFDSNMNRTKNRPLVRGQISPLLAVSFATCCAVPGVALLTWGVNPLTGALGVFNIFLYTCCYTPLKRVSITNTWVGAVVGAIPPVMGWTAATGSLDAGALLLGGILYSWQFPHFNALSWGLREDYSRGGYCMMSVTHPALCRRVALRHCLALIALSTAAPVLDITTWVFPVISLPINLYISYLGFRFYVDADRRSSRKLFFCSLWHLPLLLLLMLTCKQRPGQEGDKGEAPS.

Positions 68 to 113 (LSQRVKPKPEPPASPFLEHTSSGQARADEDELPSFPAPSRPLSRKP) are disordered. The next 7 membrane-spanning stretches (helical) occupy residues 174–194 (AGFA…TSLG), 230–250 (ISPL…VALL), 252–272 (WGVN…YTCC), 286–306 (VGAV…TGSL), 308–328 (AGAL…FNAL), 363–383 (LIAL…FPVI), and 410–430 (LFFC…TCKQ).

It belongs to the UbiA prenyltransferase family.

The protein localises to the mitochondrion membrane. The enzyme catalyses heme b + (2E,6E)-farnesyl diphosphate + H2O = Fe(II)-heme o + diphosphate. Its function is as follows. Converts protoheme IX and farnesyl diphosphate to heme O. The polypeptide is Protoheme IX farnesyltransferase, mitochondrial (Cox10) (Mus musculus (Mouse)).